A 328-amino-acid polypeptide reads, in one-letter code: Nickel import system permease protein NikB (328 aa).

6 consecutive transmembrane segments (helical) span residues 11 to 31 (LIQM…LMKL), 104 to 124 (LLIS…LGII), 139 to 159 (VIST…LLFI), 170 to 190 (ILSQ…AYII), 229 to 249 (ILPI…GTVV), and 279 to 299 (VLFI…LTLL). Residues 100-297 (APITLLISFS…IINTIADLLT (198 aa)) form the ABC transmembrane type-1 domain.

Belongs to the binding-protein-dependent transport system permease family. OppBC subfamily. In terms of assembly, the complex is composed of two ATP-binding proteins (NikD and NikE), two transmembrane proteins (NikB and NikC) and a solute-binding protein (NikA).

The protein resides in the cell membrane. Part of the ABC transporter complex NikABCDE (Opp2) involved in nickel import. Probably responsible for the translocation of the substrate across the membrane. This Staphylococcus aureus (strain MRSA252) protein is Nickel import system permease protein NikB.